Here is a 590-residue protein sequence, read N- to C-terminus: Aspartate--tRNA(Asp/Asn) ligase (590 aa).

Glu175 is a binding site for L-aspartate. An aspartate region spans residues 199-202 (QQYK). L-aspartate is bound by residues Arg221 and His450. Residue 221–223 (RDE) coordinates ATP. Glu484 serves as a coordination point for ATP. Arg491 contacts L-aspartate. 536-539 (GVDR) lines the ATP pocket.

It belongs to the class-II aminoacyl-tRNA synthetase family. Type 1 subfamily. Homodimer.

It localises to the cytoplasm. The catalysed reaction is tRNA(Asx) + L-aspartate + ATP = L-aspartyl-tRNA(Asx) + AMP + diphosphate. In terms of biological role, aspartyl-tRNA synthetase with relaxed tRNA specificity since it is able to aspartylate not only its cognate tRNA(Asp) but also tRNA(Asn). Reaction proceeds in two steps: L-aspartate is first activated by ATP to form Asp-AMP and then transferred to the acceptor end of tRNA(Asp/Asn). This chain is Aspartate--tRNA(Asp/Asn) ligase, found in Bradyrhizobium diazoefficiens (strain JCM 10833 / BCRC 13528 / IAM 13628 / NBRC 14792 / USDA 110).